Reading from the N-terminus, the 867-residue chain is Alanine--tRNA ligase (867 aa).

Zn(2+) is bound by residues histidine 555, histidine 559, cysteine 657, and histidine 661.

This sequence belongs to the class-II aminoacyl-tRNA synthetase family. Zn(2+) is required as a cofactor.

Its subcellular location is the cytoplasm. The enzyme catalyses tRNA(Ala) + L-alanine + ATP = L-alanyl-tRNA(Ala) + AMP + diphosphate. Functionally, catalyzes the attachment of alanine to tRNA(Ala) in a two-step reaction: alanine is first activated by ATP to form Ala-AMP and then transferred to the acceptor end of tRNA(Ala). Also edits incorrectly charged Ser-tRNA(Ala) and Gly-tRNA(Ala) via its editing domain. In Psychromonas ingrahamii (strain DSM 17664 / CCUG 51855 / 37), this protein is Alanine--tRNA ligase.